A 243-amino-acid chain; its full sequence is Probable transcriptional regulator ycf27 (243 aa).

The Response regulatory domain occupies 7–120; sequence KILVVDDEAS…ELEARIRSVL (114 aa). Position 56 is a 4-aspartylphosphate (Asp-56). A DNA-binding region (H-T-H motif) is located at residues 76–94; it reads DVPIIMLTALGEVCDRITG. Residues 135–236 constitute a DNA-binding region (ompR/PhoB-type); it reads SGIISIGFLK…ARGTGYLFQR (102 aa).

The protein localises to the plastid. It localises to the chloroplast. Functionally, probable promoter-specific protein mediating the interaction between DNA and RNA polymerase. The polypeptide is Probable transcriptional regulator ycf27 (ycf27) (Porphyra purpurea (Red seaweed)).